A 131-amino-acid polypeptide reads, in one-letter code: Small ribosomal subunit protein uS19 (131 aa).

This sequence belongs to the universal ribosomal protein uS19 family.

Functionally, protein S19 forms a complex with S13 that binds strongly to the 16S ribosomal RNA. The chain is Small ribosomal subunit protein uS19 from Nitrosopumilus maritimus (strain SCM1).